Consider the following 234-residue polypeptide: Probable transcriptional regulatory protein TcrX (234 aa).

The Response regulatory domain occupies Thr10–Leu124. At Asp59 the chain carries 4-aspartylphosphate. The ompR/PhoB-type DNA-binding region spans Gly135–Pro232.

In terms of processing, phosphorylated by TcrY.

The protein localises to the cytoplasm. Member of the two-component regulatory system TcrY/TcrX. In Mycobacterium tuberculosis (strain ATCC 25618 / H37Rv), this protein is Probable transcriptional regulatory protein TcrX (tcrX).